The primary structure comprises 426 residues: Transcriptional enhancer factor TEF-1 (426 aa).

The residue at position 1 (Met1) is an N-acetylmethionine. Over residues 1–12 the composition is skewed to polar residues; that stretch reads MEPSSWSGSESP. A disordered region spans residues 1–31; sequence MEPSSWSGSESPAENMERMSDSADKPIDNDA. Ser11 bears the Phosphoserine mark. Over residues 15–28 the composition is skewed to basic and acidic residues; sequence NMERMSDSADKPID. A DNA-binding region (TEA) is located at residues 28 to 104; it reads DNDAEGVWSP…QVLARRKSRD (77 aa). N6-lactoyllysine is present on Lys108. Positions 167–426 are transcriptional activation; that stretch reads GSSQDVKPFV…QHHIYRLVKD (260 aa).

Interacts with YAP1 and WWTR1/TAZ. In terms of processing, lactylation by AARS1 promotes nuclear localization and stabilization of YAP1, leading to increased Hippo signaling pathway. Delactylated by SIRT1. In terms of tissue distribution, in developing skeletal muscle and myocardium, in mitotic neuroblasts both in the brain and spinal cord. At later stages of embryogenesis expressed in several developing structures such as the olfactory system, the intestine, and the kidney.

It is found in the nucleus. Its function is as follows. Transcription factor which plays a key role in the Hippo signaling pathway, a pathway involved in organ size control and tumor suppression by restricting proliferation and promoting apoptosis. The core of this pathway is composed of a kinase cascade wherein MST1/MST2, in complex with its regulatory protein SAV1, phosphorylates and activates LATS1/2 in complex with its regulatory protein MOB1, which in turn phosphorylates and inactivates YAP1 oncoprotein and WWTR1/TAZ. Acts by mediating gene expression of YAP1 and WWTR1/TAZ, thereby regulating cell proliferation, migration and epithelial mesenchymal transition (EMT) induction. Binds specifically and cooperatively to the SPH and GT-IIC 'enhansons' (5'-GTGGAATGT-3') and activates transcription in vivo in a cell-specific manner. The activation function appears to be mediated by a limiting cell-specific transcriptional intermediary factor (TIF). Involved in cardiac development. Binds to the M-CAT motif. The protein is Transcriptional enhancer factor TEF-1 (Tead1) of Mus musculus (Mouse).